The primary structure comprises 131 residues: Large ribosomal subunit protein bL17 (131 aa).

This sequence belongs to the bacterial ribosomal protein bL17 family. Part of the 50S ribosomal subunit. Contacts protein L32.

The sequence is that of Large ribosomal subunit protein bL17 from Finegoldia magna (strain ATCC 29328 / DSM 20472 / WAL 2508) (Peptostreptococcus magnus).